Reading from the N-terminus, the 81-residue chain is Photosystem I iron-sulfur center (81 aa).

4Fe-4S ferredoxin-type domains follow at residues 2-31 (AHSV…MVPW) and 39-68 (IASA…VRVY). Positions 11, 14, 17, 21, 48, 51, 54, and 58 each coordinate [4Fe-4S] cluster.

In terms of assembly, the eukaryotic PSI reaction center is composed of at least 11 subunits. [4Fe-4S] cluster serves as cofactor.

It is found in the plastid. Its subcellular location is the chloroplast thylakoid membrane. The enzyme catalyses reduced [plastocyanin] + hnu + oxidized [2Fe-2S]-[ferredoxin] = oxidized [plastocyanin] + reduced [2Fe-2S]-[ferredoxin]. Its function is as follows. Apoprotein for the two 4Fe-4S centers FA and FB of photosystem I (PSI); essential for photochemical activity. FB is the terminal electron acceptor of PSI, donating electrons to ferredoxin. The C-terminus interacts with PsaA/B/D and helps assemble the protein into the PSI complex. Required for binding of PsaD and PsaE to PSI. PSI is a plastocyanin-ferredoxin oxidoreductase, converting photonic excitation into a charge separation, which transfers an electron from the donor P700 chlorophyll pair to the spectroscopically characterized acceptors A0, A1, FX, FA and FB in turn. This chain is Photosystem I iron-sulfur center, found in Mesostigma viride (Green alga).